We begin with the raw amino-acid sequence, 72 residues long: DNA-directed RNA polymerase subunit omega (72 aa).

The protein belongs to the RNA polymerase subunit omega family. As to quaternary structure, the RNAP catalytic core consists of 2 alpha, 1 beta, 1 beta' and 1 omega subunit. When a sigma factor is associated with the core the holoenzyme is formed, which can initiate transcription.

It carries out the reaction RNA(n) + a ribonucleoside 5'-triphosphate = RNA(n+1) + diphosphate. Promotes RNA polymerase assembly. Latches the N- and C-terminal regions of the beta' subunit thereby facilitating its interaction with the beta and alpha subunits. The polypeptide is DNA-directed RNA polymerase subunit omega (Clostridium acetobutylicum (strain ATCC 824 / DSM 792 / JCM 1419 / IAM 19013 / LMG 5710 / NBRC 13948 / NRRL B-527 / VKM B-1787 / 2291 / W)).